The sequence spans 613 residues: Pentatricopeptide repeat-containing protein At2g45350, chloroplastic (613 aa).

PPR repeat units follow at residues 85 to 119, 120 to 154, 155 to 185, 186 to 216, 219 to 250, 251 to 285, 286 to 312, 313 to 347, 349 to 383, 384 to 414, 415 to 449, 450 to 480, and 486 to 516; these read DPFL…GVSV, DKFS…GLWS, DLFL…MPKR, DSVS…MPME, NLIS…MPEK, DLIS…DVVT, WATM…MPHR, DVVA…SHLL, DDTT…QFYL, GGKL…IENK, SIDH…SLKP, DDIT…MRRK, and RLQH…MPVE. The segment at 521–596 is type E motif; the sequence is IWRTFLTACS…IPGCSWIELD (76 aa).

Belongs to the PPR family. PCMP-E subfamily. In terms of assembly, interacts with DYW1.

Its subcellular location is the plastid. It localises to the chloroplast. Its function is as follows. Plays a major role in chloroplast RNA editing. Acts as a site-recognition transacting factor to recruit C-deaminase. Involved in single RNA editing events. Required for the edition of the site 1 of ndhD (ndhD-1 site corresponding to cytidine-2), which is a plastid-encoded subunit of the NADH-plastoquinone oxidoreductase. The interaction with DYW1 is required for its function in editing the ndhD-1 site. The chain is Pentatricopeptide repeat-containing protein At2g45350, chloroplastic (CRR4) from Arabidopsis thaliana (Mouse-ear cress).